The sequence spans 404 residues: Histidinol dehydrogenase (404 aa).

The NAD(+) site is built by Tyr-114, Gln-176, and Asn-199. The substrate site is built by Ser-222, Gln-244, and His-247. Zn(2+)-binding residues include Gln-244 and His-247. Catalysis depends on proton acceptor residues Glu-300 and His-301. His-301, Asp-334, Glu-388, and His-393 together coordinate substrate. Asp-334 serves as a coordination point for Zn(2+). His-393 is a Zn(2+) binding site.

Belongs to the histidinol dehydrogenase family. Zn(2+) serves as cofactor.

It catalyses the reaction L-histidinol + 2 NAD(+) + H2O = L-histidine + 2 NADH + 3 H(+). It participates in amino-acid biosynthesis; L-histidine biosynthesis; L-histidine from 5-phospho-alpha-D-ribose 1-diphosphate: step 9/9. In terms of biological role, catalyzes the sequential NAD-dependent oxidations of L-histidinol to L-histidinaldehyde and then to L-histidine. The sequence is that of Histidinol dehydrogenase (hisD) from Archaeoglobus fulgidus (strain ATCC 49558 / DSM 4304 / JCM 9628 / NBRC 100126 / VC-16).